A 527-amino-acid polypeptide reads, in one-letter code: MPSLSQSRRIIQQSSIRKIWNQIDTSPKHGVCVPLFSLYTQESCGIGEFLDLIPMIDWCISCGFQILQILPINDTGSCSSPYNSISSIALNPLHLSISALPYKEEVPAAETRIREMQQLSQLPQVHYEKVRSMKRDFFQEYYRVCKQKKLTDHPDFYAFCEQEKYWLHPYALFRSIREHLDNLPINHWPTTYTDLSQITEHERTFAEDIQFHSYLQYLCFQQMTQVREHANCKSCLIKGDIPILISKDSCDVWFYRHYFSSSESVGAPPDLYNAEGQNWHLPICNMKTLQQDNYLWWKERLRYAENFYSLYRLDHVVGLFRFWVWDESGCGRFEPHDPKNYLAQGQDILSHLLTSSSMLPIGEDLGTIPSDVKRMLESFAVCGTRIPRWERNWEGNGAYTPFDQYDPLSVTSLSTHDSSTLASWWKESPQESKLFAQFLGLPYSSTLSLHNHTEILKLSHKTSSIFRINLINDYLALFPDLISKTPRYERINLPGTISKNNWVYRVKPSIEDLSSHSKLNSLLEALF.

This sequence belongs to the disproportionating enzyme family.

It is found in the cytoplasm. The catalysed reaction is Transfers a segment of a (1-&gt;4)-alpha-D-glucan to a new position in an acceptor, which may be glucose or a (1-&gt;4)-alpha-D-glucan.. This chain is 4-alpha-glucanotransferase (malQ), found in Chlamydia trachomatis serovar D (strain ATCC VR-885 / DSM 19411 / UW-3/Cx).